The sequence spans 327 residues: MGNLPEFSIRDLVEAGVHLGHKAGRWNPAMAPYIYGVHKYKDIHVIDLRKTLVLLRDALSVLYDVVLKRGRVLFVGTKVQASNIVAEEATRCGQYYVNHRWLGGMLTNWETVSSSIRRLVEFERLINNNEGQFTKKELLMLDKQRGKLERSLGGIREMGGLPHALFVIDTNKEHIAIREANKLKIPVVAILDTNSDPGGVDYPIPGNDDSVRSIDFFCRAVSRTILEAIRSDLASSGVNIAAKGSDVAESYAGTAADAGHTPVSETLSAGGPTAGASPYIPEVGPSVVEVDTHKSAALPDSRPNDADVPAEDGVLPDPGVADGAALE.

Residues 258–327 (AGHTPVSETL…PGVADGAALE (70 aa)) are disordered.

The protein belongs to the universal ribosomal protein uS2 family.

The chain is Small ribosomal subunit protein uS2 from Anaplasma marginale (strain St. Maries).